Reading from the N-terminus, the 293-residue chain is Glutamyl-Q tRNA(Asp) synthetase (293 aa).

Residues 8–12 and E44 each bind L-glutamate; that span reads RFAPT. Positions 11 to 21 match the 'HIGH' region motif; that stretch reads PTPSGYLHFGS. Zn(2+)-binding residues include C100, C102, Y114, and C118. Residues Y171 and R189 each contribute to the L-glutamate site. Residues 227–231 carry the 'KMSKS' region motif; the sequence is KLGKS. K230 serves as a coordination point for ATP.

This sequence belongs to the class-I aminoacyl-tRNA synthetase family. GluQ subfamily. Zn(2+) serves as cofactor.

Catalyzes the tRNA-independent activation of glutamate in presence of ATP and the subsequent transfer of glutamate onto a tRNA(Asp). Glutamate is transferred on the 2-amino-5-(4,5-dihydroxy-2-cyclopenten-1-yl) moiety of the queuosine in the wobble position of the QUC anticodon. The polypeptide is Glutamyl-Q tRNA(Asp) synthetase (Pseudomonas paraeruginosa (strain DSM 24068 / PA7) (Pseudomonas aeruginosa (strain PA7))).